A 643-amino-acid chain; its full sequence is Macrolide export ATP-binding/permease protein MacB (643 aa).

In terms of domain architecture, ABC transporter spans 4–242; the sequence is IEIKELNRYF…VNNQSKAKSR (239 aa). Residue 40 to 47 coordinates ATP; sequence GQSGSGKS. Helical transmembrane passes span 269 to 289, 523 to 543, 572 to 592, and 603 to 623; these read LLTM…VALG, IAFI…LVSV, ILIC…IGGI, and VFST…GVIF.

The protein belongs to the ABC transporter superfamily. Macrolide exporter (TC 3.A.1.122) family. Homodimer. Part of the tripartite efflux system MacAB-TolC, which is composed of an inner membrane transporter, MacB, a periplasmic membrane fusion protein, MacA, and an outer membrane component, TolC. The complex forms a large protein conduit and can translocate molecules across both the inner and outer membranes. Interacts with MacA.

Its subcellular location is the cell inner membrane. Part of the tripartite efflux system MacAB-TolC. MacB is a non-canonical ABC transporter that contains transmembrane domains (TMD), which form a pore in the inner membrane, and an ATP-binding domain (NBD), which is responsible for energy generation. Confers resistance against macrolides. The chain is Macrolide export ATP-binding/permease protein MacB from Mannheimia succiniciproducens (strain KCTC 0769BP / MBEL55E).